The following is a 466-amino-acid chain: Ribulose bisphosphate carboxylase large chain (466 aa).

Lys5 carries the N6,N6,N6-trimethyllysine modification. Residues Asn114 and Thr164 each coordinate substrate. Residue Lys166 is the Proton acceptor of the active site. Lys168 lines the substrate pocket. The Mg(2+) site is built by Lys192, Asp194, and Glu195. At Lys192 the chain carries N6-carboxylysine. The active-site Proton acceptor is the His285. Positions 286, 318, and 370 each coordinate substrate.

It belongs to the RuBisCO large chain family. Type I subfamily. In terms of assembly, heterohexadecamer of 8 large chains and 8 small chains; disulfide-linked. The disulfide link is formed within the large subunit homodimers. Mg(2+) is required as a cofactor. The disulfide bond which can form in the large chain dimeric partners within the hexadecamer appears to be associated with oxidative stress and protein turnover.

The protein resides in the plastid. It is found in the chloroplast. It catalyses the reaction 2 (2R)-3-phosphoglycerate + 2 H(+) = D-ribulose 1,5-bisphosphate + CO2 + H2O. The enzyme catalyses D-ribulose 1,5-bisphosphate + O2 = 2-phosphoglycolate + (2R)-3-phosphoglycerate + 2 H(+). Its function is as follows. RuBisCO catalyzes two reactions: the carboxylation of D-ribulose 1,5-bisphosphate, the primary event in carbon dioxide fixation, as well as the oxidative fragmentation of the pentose substrate in the photorespiration process. Both reactions occur simultaneously and in competition at the same active site. The sequence is that of Ribulose bisphosphate carboxylase large chain from Cucurbita pepo (Vegetable marrow).